The following is a 98-amino-acid chain: MAVGRQYIEDHTEQLHKLCDNLVKYIELETKAITHEKAAEDTEVVIEVSLDLDNSSDDASIINKKAITVTSDDIANSNEDAARNTNKSHGDVLRCYYQ.

This is an uncharacterized protein from Rickettsia prowazekii (strain Madrid E).